Consider the following 723-residue polypeptide: Nicastrin (723 aa).

Positions 1–16 (MKKWLVIVLIIAGIRC) are cleaved as a signal peptide. Topologically, residues 17 to 678 (DGFSDQVFRT…ESVNLYLMED (662 aa)) are extracellular. Residues Asn40, Asn181, Asn271, Asn328, Asn409, and Asn627 are each glycosylated (N-linked (GlcNAc...) asparagine). The chain crosses the membrane as a helical span at residues 679-699 (ASFEYTMILIAVISALLSIFA). At 700-723 (VGRCSETTFIVDEGEPAAEGGEPL) the chain is on the cytoplasmic side.

This sequence belongs to the nicastrin family. As to quaternary structure, component of the gamma-secretase complex, a complex probably composed of the presenilin homodimer (sel-12, hop-1 or spe-4), nicastrin (aph-2), aph-1 and pen-2.

It localises to the membrane. In terms of biological role, essential subunit of the gamma-secretase complex, an endoprotease complex that catalyzes the intramembrane cleavage of integral membrane proteins such as Notch (glp-1 or lin-12). It may represents a stabilizing cofactor required for the assembly of the gamma-secretase complex. The sequence is that of Nicastrin (aph-2) from Caenorhabditis elegans.